Consider the following 143-residue polypeptide: Hemoglobin subunit alpha (143 aa).

The 142-residue stretch at 2–143 (SLTARDKSVV…LSAALADKYR (142 aa)) folds into the Globin domain. Residue His-60 participates in O2 binding. Heme b is bound at residue His-89.

Belongs to the globin family. In terms of assembly, heterotetramer of two alpha chains and two beta chains. Red blood cells.

Involved in oxygen transport from gills to the various peripheral tissues. The polypeptide is Hemoglobin subunit alpha (hba) (Salmo salar (Atlantic salmon)).